The primary structure comprises 250 residues: MFPLLGQSACAALNSLPAKRKKAGLQAHRKVYKQLLQYHSFTKINKFLELKHPDPKKVKYRLFFEVSLGPRIVDVIVLTSYETERVCYVVELKTCLGSEFNFTSVRAAQRTQGLCQLYDSTKYLSNNAPLGGERWEVRAHLLFKSQSAMKTLYVEHPGFQFNQLQCTTGALSVFLKSREDVACRQLLYQGLQCAALAKKMRVLGTKSTKRARDKPTQVSRVPAQRSPVQKARGRKQAESHKKGASKGRAG.

The interval 205-250 (TKSTKRARDKPTQVSRVPAQRSPVQKARGRKQAESHKKGASKGRAG) is disordered.

The protein belongs to the herpesviridae UL24 family.

This Alcelaphine herpesvirus 1 (strain C500) (AlHV-1) protein is Protein UL24 homolog (20).